The following is a 148-amino-acid chain: Flavodoxin (148 aa).

The Flavodoxin-like domain occupies 4-145 (ALIVYGSTTG…DIVGWAHDVR (142 aa)).

It belongs to the flavodoxin family. FMN is required as a cofactor.

Low-potential electron donor to a number of redox enzymes. The polypeptide is Flavodoxin (Nitratidesulfovibrio vulgaris (strain ATCC 29579 / DSM 644 / CCUG 34227 / NCIMB 8303 / VKM B-1760 / Hildenborough) (Desulfovibrio vulgaris)).